Consider the following 802-residue polypeptide: ATP-dependent RNA helicase dbp4 (802 aa).

The interval 1 to 24 is disordered; sequence MAPINGSRNGKHSKPQRGGNLKRK. The segment covering 9 to 24 has biased composition (basic residues); it reads NGKHSKPQRGGNLKRK. The short motif at 47 to 75 is the Q motif element; sequence EQFTDLPLSEPTASGLASSHYKTLTDIQS. In terms of domain architecture, Helicase ATP-binding spans 78 to 252; that stretch reads ISHALKGRDI…RLSLQDPEYV (175 aa). Residue 91 to 98 participates in ATP binding; sequence AKTGSGKT. Residues 200 to 203 carry the DEAD box motif; that stretch reads DEAD. A Helicase C-terminal domain is found at 274-437; that stretch reads PLPQKLDVLW…SIKDQLQNMC (164 aa). 3 disordered regions span residues 494–538, 589–614, and 685–802; these read GDDT…KYDR, DKDLDVGGSSSEDEEDADGTEKKGAK, and LAEE…GLLG. Over residues 520 to 538 the composition is skewed to basic and acidic residues; sequence GEKKKTKKDETQVRTKYDR. The segment covering 685–704 has biased composition (basic and acidic residues); sequence LAEEAERTRQADLEDKEVAK. A compositionally biased stretch (basic residues) spans 705 to 714; sequence QKKREKKEKR.

This sequence belongs to the DEAD box helicase family. DDX10/DBP4 subfamily. In terms of assembly, interacts with the U3 and U14 snoRNAs. Associates with pre-ribosomal complexes.

It localises to the nucleus. Its subcellular location is the nucleolus. It catalyses the reaction ATP + H2O = ADP + phosphate + H(+). In terms of biological role, ATP-dependent RNA helicase required for ribosome biogenesis. Involved in the release of U14 snoRNA in pre-ribosomal complexes. Required for pre-rRNA cleavage at site A2. This Aspergillus niger (strain ATCC MYA-4892 / CBS 513.88 / FGSC A1513) protein is ATP-dependent RNA helicase dbp4 (dbp4).